The sequence spans 300 residues: Ribosomal protein L11 methyltransferase (300 aa).

Positions 152, 173, 195, and 234 each coordinate S-adenosyl-L-methionine.

It belongs to the methyltransferase superfamily. PrmA family.

Its subcellular location is the cytoplasm. It catalyses the reaction L-lysyl-[protein] + 3 S-adenosyl-L-methionine = N(6),N(6),N(6)-trimethyl-L-lysyl-[protein] + 3 S-adenosyl-L-homocysteine + 3 H(+). Its function is as follows. Methylates ribosomal protein L11. This Burkholderia cenocepacia (strain HI2424) protein is Ribosomal protein L11 methyltransferase.